Here is a 1352-residue protein sequence, read N- to C-terminus: Stress response protein NST1 (1352 aa).

Residues 1–12 (MSSKSQQPPTGL) are compositionally biased toward polar residues. Disordered regions lie at residues 1–66 (MSSK…FFNF), 216–422 (NANA…TQSS), 503–522 (NGLR…VEVD), 531–616 (DHRA…FLSF), 651–693 (RRSV…AEEG), 726–880 (LREL…IAKE), 978–1118 (GLKS…DDAF), 1139–1275 (GSLI…GAGV), and 1307–1336 (GGTA…HQQQ). Positions 16–25 (AAKKRAKKAA) are enriched in basic residues. Over residues 26 to 45 (KQSQNPQPQSAPQTSSQTPA) the composition is skewed to low complexity. The span at 46–59 (SVPPLPPASVPDPL) shows a compositional bias: pro residues. The span at 218–229 (NARSFPSPQQTI) shows a compositional bias: polar residues. The span at 242 to 254 (REEEYDDEEEIEE) shows a compositional bias: acidic residues. Residues 268 to 277 (KKNKKKKKKG) are compositionally biased toward basic residues. Over residues 287 to 300 (VEPPAPLPPLPPPS) the composition is skewed to pro residues. The segment covering 317–330 (LPTHQPQPLSQQPP) has biased composition (low complexity). A compositionally biased stretch (pro residues) spans 331-349 (SLNPLPPPAPASAPTPTPP). Over residues 368-388 (PARSARAAGKAPASAAPPHNA) the composition is skewed to low complexity. A compositionally biased stretch (basic and acidic residues) spans 531–541 (DHRAPELHDHD). Residues 542–583 (PDDLDGEESEEYDDDDDYADDDELDDDDIGTDEADVGDEIDE) are compositionally biased toward acidic residues. Positions 653 to 664 (SVREEQNLRDMQ) are enriched in basic and acidic residues. Positions 665–680 (EETDEEEEEEDDDESR) are enriched in acidic residues. Basic and acidic residues-rich tracts occupy residues 681-693 (DEPM…AEEG), 726-749 (LREL…EAQK), and 759-880 (QKAE…IAKE). Residues 712-943 (AYRERVAKQR…AAQQAQRERA (232 aa)) adopt a coiled-coil conformation. Polar residues predominate over residues 1008–1020 (TNATPGRSMQKTP). A compositionally biased stretch (pro residues) spans 1153–1164 (PTPPAPIAPPNL). 2 stretches are compositionally biased toward polar residues: residues 1173-1186 (SDGQ…LRST) and 1208-1219 (QPQQRRPTTSWD).

This sequence belongs to the NST1 family.

The protein resides in the cytoplasm. In terms of biological role, may act as a negative regulator of salt tolerance. The sequence is that of Stress response protein NST1 (NST1) from Cryptococcus neoformans var. neoformans serotype D (strain JEC21 / ATCC MYA-565) (Filobasidiella neoformans).